The sequence spans 329 residues: Carbohydrate sulfotransferase chst-1 (329 aa).

Residues 1–3 (MLK) are Cytoplasmic-facing. The chain crosses the membrane as a helical; Signal-anchor for type II membrane protein span at residues 4–23 (WFIISCCLLTAISYSTYYLF). Over 24-329 (TSNSWIKTVK…FDFDTTFINS (306 aa)) the chain is Lumenal. 3'-phosphoadenylyl sulfate is bound by residues 91 to 97 (KKSMSTL) and 157 to 165 (RDPIARFIS).

Belongs to the sulfotransferase 2 family. Highly expressed in the head and tail of hermaphrodites, in particular in amphid and phasmid sheath cells.

Its subcellular location is the golgi apparatus membrane. The catalysed reaction is chondroitin beta-D-glucuronate + n 3'-phosphoadenylyl sulfate = chondroitin 4'-sulfate + n adenosine 3',5'-bisphosphate + n H(+). Functionally, catalyzes the transfer of sulfate to position 4 of non-reducing N-acetylgalactosamine (GalNAc) residue of chondroitin. In Caenorhabditis elegans, this protein is Carbohydrate sulfotransferase chst-1.